The following is a 200-amino-acid chain: Interferon lambda-1 (200 aa).

Residues 1 to 19 (MAAAWTVVLVTLVLGLAVA) form the signal peptide. An N-linked (GlcNAc...) asparagine glycan is attached at N65. A disulfide bridge links C68 with C164.

This sequence belongs to the lambda interferon family.

It is found in the secreted. Functionally, cytokine with antiviral, antitumour and immunomodulatory activities. Plays a critical role in the antiviral host defense, predominantly in the epithelial tissues. Acts as a ligand for the heterodimeric class II cytokine receptor composed of IL10RB and IFNLR1, and receptor engagement leads to the activation of the JAK/STAT signaling pathway resulting in the expression of IFN-stimulated genes (ISG), which mediate the antiviral state. Has a restricted receptor distribution and therefore restricted targets: is primarily active in epithelial cells and this cell type-selective action is because of the epithelial cell-specific expression of its receptor IFNLR1. Exerts an immunomodulatory effect by up-regulating MHC class I antigen expression. The sequence is that of Interferon lambda-1 (IFNL1) from Homo sapiens (Human).